Reading from the N-terminus, the 108-residue chain is ATP-dependent Clp protease adapter protein ClpS (108 aa).

This sequence belongs to the ClpS family. In terms of assembly, binds to the N-terminal domain of the chaperone ClpA.

In terms of biological role, involved in the modulation of the specificity of the ClpAP-mediated ATP-dependent protein degradation. In Cupriavidus necator (strain ATCC 17699 / DSM 428 / KCTC 22496 / NCIMB 10442 / H16 / Stanier 337) (Ralstonia eutropha), this protein is ATP-dependent Clp protease adapter protein ClpS.